A 66-amino-acid chain; its full sequence is 14-3-3-like protein 2 (66 aa).

This sequence belongs to the 14-3-3 family.

The protein is 14-3-3-like protein 2 of Pseudotsuga menziesii (Douglas-fir).